The following is a 196-amino-acid chain: T-cell surface glycoprotein CD3 epsilon chain (196 aa).

A signal peptide spans 1–21 (MPSGNLWKVLGLCLLSVGAWG). Residues 22 to 116 (QEDIERPDED…VCENCVEVDL (95 aa)) are Extracellular-facing. Residues 28–102 (PDEDTQKTFK…VGEKTSHRLY (75 aa)) form the Ig-like domain. A disulfide bridge links C49 with C91. The chain crosses the membrane as a helical span at residues 117–137 (MAVVTIIVVDICITLGLLMVV). Residues 138-196 (YYYSKSRKAKAMPVTRGAGAGGRPRGQNRERPPPVPNPDYEPIRKGQRDLYSGLNQRGR) lie on the Cytoplasmic side of the membrane. The interval 150–196 (PVTRGAGAGGRPRGQNRERPPPVPNPDYEPIRKGQRDLYSGLNQRGR) is disordered. Positions 164 to 181 (QNRERPPPVPNPDYEPIR) are NUMB-binding region. Positions 167-194 (ERPPPVPNPDYEPIRKGQRDLYSGLNQR) constitute an ITAM domain. Residues 168 to 175 (RPPPVPNP) form a proline-rich sequence region. Phosphotyrosine occurs at positions 177 and 188.

As to quaternary structure, the TCR-CD3 complex is composed of a CD3D/CD3E and a CD3G/CD3E heterodimers that preferentially associate with TCRalpha and TCRbeta, respectively, to form TCRalpha/CD3E/CD3G and TCRbeta/CD3G/CD3E trimers. In turn, the hexamer interacts with CD3Z homodimer to form the TCR-CD3 complex. Alternatively, TCRalpha and TCRbeta can be replaced by TCRgamma and TCRdelta. Interacts with CD6. Interacts (via Proline-rich sequence) with NCK1; the interaction is ligand dependent but independent of tyrosine kinase activation. Phosphorylated on Tyr residues after T-cell receptor triggering by LCK in association with CD4/CD8.

The protein localises to the cell membrane. Part of the TCR-CD3 complex present on T-lymphocyte cell surface that plays an essential role in adaptive immune response. When antigen presenting cells (APCs) activate T-cell receptor (TCR), TCR-mediated signals are transmitted across the cell membrane by the CD3 chains CD3D, CD3E, CD3G and CD3Z. All CD3 chains contain immunoreceptor tyrosine-based activation motifs (ITAMs) in their cytoplasmic domain. Upon TCR engagement, these motifs become phosphorylated by Src family protein tyrosine kinases LCK and FYN, resulting in the activation of downstream signaling pathways. In addition of this role of signal transduction in T-cell activation, CD3E plays an essential role in correct T-cell development. Also participates in internalization and cell surface down-regulation of TCR-CD3 complexes via endocytosis sequences present in CD3E cytosolic region. In addition to its role as a TCR coreceptor, it serves as a receptor for ITPRIPL1. Ligand recognition inhibits T-cell activation by promoting interaction with NCK1, which prevents CD3E-ZAP70 interaction and blocks the ERK-NFkB signaling cascade and calcium influx. The polypeptide is T-cell surface glycoprotein CD3 epsilon chain (CD3E) (Sus scrofa (Pig)).